Here is a 1310-residue protein sequence, read N- to C-terminus: Contactin-associated protein-like 4 (1310 aa).

A signal peptide spans 1–27 (MNMGSVAGAVLKMLLLLSTQNWNRVEA). At 28–1243 (GNSYDCDEPL…LTHAIKSDSA (1216 aa)) the chain is on the extracellular side. The F5/8 type C domain occupies 33–179 (CDEPLVSALP…IGMRIEVFGC (147 aa)). A disulfide bridge links Cys-33 with Cys-179. The region spanning 214–346 (FKTMESDGIL…NLFYNGVDVI (133 aa)) is the Laminin G-like 1 domain. 3 N-linked (GlcNAc...) asparagine glycosylation sites follow: Asn-262, Asn-287, and Asn-361. 4 disulfide bridges follow: Cys-334–Cys-366, Cys-517–Cys-549, Cys-555–Cys-566, and Cys-560–Cys-575. Residues 400–529 (FRTWNKAGLL…LISINNKMVD (130 aa)) form the Laminin G-like 2 domain. A glycan (N-linked (GlcNAc...) asparagine) is linked at Asn-540. Residues 551–588 (ISDRCLPNSCEHGGECSQSWSTFHCNCTNTGYTGATCH) enclose the EGF-like 1 domain. Asn-576 carries an N-linked (GlcNAc...) asparagine glycan. A disulfide bridge links Cys-577 with Cys-587. The Fibrinogen C-terminal domain maps to 589–794 (SSVYEQSCEA…LLCRGDRPFW (206 aa)). N-linked (GlcNAc...) asparagine glycosylation is found at Asn-604, Asn-627, Asn-639, Asn-708, and Asn-750. In terms of domain architecture, Laminin G-like 3 spans 795 to 960 (NAASFNTEAS…TVTPGVQPGC (166 aa)). Intrachain disulfides connect Cys-933/Cys-960, Cys-964/Cys-977, Cys-971/Cys-986, and Cys-988/Cys-998. One can recognise an EGF-like 2 domain in the interval 960 to 999 (CRGHCGSYGKLCRHGGKCREKPSGFFCDCSSSAYAGPFCS). N-linked (GlcNAc...) asparagine glycosylation is found at Asn-1019, Asn-1025, and Asn-1075. The 157-residue stretch at 1048-1204 (FRTTRAPSLL…VTGHVTESSC (157 aa)) folds into the Laminin G-like 4 domain. A disulfide bridge links Cys-1169 with Cys-1204. A helical membrane pass occupies residues 1244-1264 (VIGGLIAVVIFILLCVSAIAV). Residues 1265–1310 (RIYQQKRLYKRNEAKRSENVDSAEAVLKSELHIQNAVGENQKEYFF) are Cytoplasmic-facing.

This sequence belongs to the neurexin family. As to quaternary structure, interacts with TIAM1. In terms of tissue distribution, specifically present in developing cortical interneurons: highly expressed in cortical parvalbumin (PV) cells and midbrain dopaminergic neurons and is localized presynaptically (at protein level). Also present in the substantia nigra pars compacta (SnC) and ventral tegmental area (VTA) midbrain dopaminergic projection populations.

The protein resides in the presynaptic cell membrane. Presynaptic protein involved in both dopaminergic synaptic transmission and GABAergic system, thereby participating in the structural maturation of inhibitory interneuron synapses. Involved in the dopaminergic synaptic transmission by attenuating dopamine release through a presynaptic mechanism. Also participates in the GABAergic system. The chain is Contactin-associated protein-like 4 (Cntnap4) from Mus musculus (Mouse).